Consider the following 356-residue polypeptide: N-methyltransferase 4 (356 aa).

S-adenosyl-L-methionine contacts are provided by residues Gln93–Ser94, Ile128–Gly136, and Thr155–Gln160.

It belongs to the CFA/CMAS family. In terms of tissue distribution, expressed in stems, roots, flower buds and leaves.

In terms of biological role, probable N-methyltransferase not involved in benzylisoquinoline metabolism. Shows no detectable activity with (s)-coclaurine, (R)- or (S)-reticuline, papaverine or (R,S)-tetrahydropapaverine. The protein is N-methyltransferase 4 (NMT4) of Papaver somniferum (Opium poppy).